The primary structure comprises 432 residues: Adenylosuccinate synthetase (432 aa).

GTP-binding positions include Gly13–Lys19 and Gly41–Thr43. Asp14 acts as the Proton acceptor in catalysis. Residues Asp14 and Gly41 each coordinate Mg(2+). Residues Asp14–Lys17, Asn39–His42, Thr130, Arg144, Gln225, Thr240, and Arg304 each bind IMP. Catalysis depends on His42, which acts as the Proton donor. Residue Ala300–Arg306 coordinates substrate. GTP is bound by residues Arg306, Lys332 to Asp334, and Ser415 to Gly417.

The protein belongs to the adenylosuccinate synthetase family. As to quaternary structure, homodimer. It depends on Mg(2+) as a cofactor.

Its subcellular location is the cytoplasm. The catalysed reaction is IMP + L-aspartate + GTP = N(6)-(1,2-dicarboxyethyl)-AMP + GDP + phosphate + 2 H(+). Its pathway is purine metabolism; AMP biosynthesis via de novo pathway; AMP from IMP: step 1/2. Functionally, plays an important role in the de novo pathway of purine nucleotide biosynthesis. Catalyzes the first committed step in the biosynthesis of AMP from IMP. The sequence is that of Adenylosuccinate synthetase from Salmonella heidelberg (strain SL476).